The primary structure comprises 742 residues: MKQAMTPEEIKEKKPYLDWSLTEAEYDYIRTQLLGRLPNYTETGLFSAMWSEHCSYKKSKPVLRLFPNKNERVLQGPGEGAGVVDIDDGQAVVFKAESHNHPTTVEPYQGAATGVGGILRDIFSMGARPIASLDSLHFGELDNSTTRMKVTNTVRGIGDYGNCMGIPTIAGETTFDPCYQGNILCNAMSVGLMDQKDIQQGRAAGIGNAVMYVGAKTGRDGIHGATFASADFNDENMTQRSAVQVGNPFMEKLLLEACLDLIRNHPDWLVGIQDMGAAGIVSSSAEMASEGQSGMELNLDLVPQREPGMSAYEIMLSESQERMLLCVKKGHEEDVKKIFDFYDLEAVTIGRITAGHDYVLFHDGEEVCHIPVSSLTDDVLEEESLEKKPARIELAEQQPAWIPDIDNVAEVLTALLAQSTIADKSSLYQQYDSQVRTNTVAGPGSDAGVLRIRGTHKGLAMTTDGNGRFVYLSPEVGGQIALVEAAANIIASGAEPLAITDCLNYGDPTDPEIFWELHQSVQGMADACREFNTPVISGNVSLYNENNGQAIHPTPMVGMVGLIKNIDRVIPSFVQHPGDKVYLVGQTRDDYAGSELQKMMTGDISGIVESFDLHHVHQYMQRLLTTMENGLVSSAHDLSEGGLGVALAETVFKTDLGLKIDLADQHTARLFSETPGRFIVTVAPEKATEFEQVLGKDAHLIGEVTNSHWLMVKLANGELNENVAKLQETWEEAIPCQLKSKD.

H53 is an active-site residue. 2 residues coordinate ATP: Y56 and K95. E97 provides a ligand contact to Mg(2+). Residues 98-101 and R120 contribute to the substrate site; that span reads SHNH. The active-site Proton acceptor is H99. Mg(2+) is bound at residue D121. Position 244 (Q244) interacts with substrate. Position 274 (D274) interacts with Mg(2+). 318 to 320 contacts substrate; that stretch reads ESQ. D501 and G538 together coordinate ATP. N539 contributes to the Mg(2+) binding site. S541 is a binding site for substrate.

It belongs to the FGAMS family. As to quaternary structure, monomer. Part of the FGAM synthase complex composed of 1 PurL, 1 PurQ and 2 PurS subunits.

The protein resides in the cytoplasm. The enzyme catalyses N(2)-formyl-N(1)-(5-phospho-beta-D-ribosyl)glycinamide + L-glutamine + ATP + H2O = 2-formamido-N(1)-(5-O-phospho-beta-D-ribosyl)acetamidine + L-glutamate + ADP + phosphate + H(+). It participates in purine metabolism; IMP biosynthesis via de novo pathway; 5-amino-1-(5-phospho-D-ribosyl)imidazole from N(2)-formyl-N(1)-(5-phospho-D-ribosyl)glycinamide: step 1/2. Functionally, part of the phosphoribosylformylglycinamidine synthase complex involved in the purines biosynthetic pathway. Catalyzes the ATP-dependent conversion of formylglycinamide ribonucleotide (FGAR) and glutamine to yield formylglycinamidine ribonucleotide (FGAM) and glutamate. The FGAM synthase complex is composed of three subunits. PurQ produces an ammonia molecule by converting glutamine to glutamate. PurL transfers the ammonia molecule to FGAR to form FGAM in an ATP-dependent manner. PurS interacts with PurQ and PurL and is thought to assist in the transfer of the ammonia molecule from PurQ to PurL. The polypeptide is Phosphoribosylformylglycinamidine synthase subunit PurL (Limosilactobacillus reuteri (strain DSM 20016) (Lactobacillus reuteri)).